A 345-amino-acid chain; its full sequence is Mitochondrial substrate carrier family protein J (345 aa).

Topologically, residues 1–31 (MSSSHTIQETKEVHTKTNKRIQWDDLDPKRY) are mitochondrial intermembrane. Solcar repeat units lie at residues 30–118 (RYYF…VKQG), 129–217 (DLLF…SKSK), and 255–342 (EDPI…VKKL). Residues 32-52 (YFYNFLLGGSIDLLMFPLDVI) traverse the membrane as a helical segment. Topologically, residues 53–88 (RTRLQVQGSQNVIQSFPQYNGTFDGFKKLIRLEGKR) are mitochondrial matrix. A helical membrane pass occupies residues 89-110 (ALYKGFLTSECGYLCSRAIYFG). Over 111 to 129 (SYEFVKQGFLKGRSDSDSD) the chain is Mitochondrial intermembrane. The chain crosses the membrane as a helical span at residues 130–150 (LLFVTTISGAISEALASVIWV). Over 151-191 (PFDVATQSVQIQGSLSKPKYKGGSDVFKKIYGERGIKGLYK) the chain is Mitochondrial matrix. A helical transmembrane segment spans residues 192–208 (GFGATIIRNVPYSGIWW). The Mitochondrial intermembrane portion of the chain corresponds to 209-257 (GTYEISKSKLTQFNIRQKLGLKERSSHSLAVSAEIDKNNPSHEVENEDP). The helical transmembrane segment at 258–278 (IIHFISGFFAAVFATSITNPL) threads the bilayer. At 279 to 316 (DVAKTRLQTGVFPENEKPNFYTIIKSTIRKEGIRALWK) the chain is on the mitochondrial matrix side. A helical transmembrane segment spans residues 317-337 (GLVPSLLTSTPYSMISIFLYE). The Mitochondrial intermembrane segment spans residues 338–345 (EVKKLSLK).

Belongs to the mitochondrial carrier (TC 2.A.29) family.

Its subcellular location is the mitochondrion inner membrane. Its function is as follows. Mitochondrial solute carriers shuttle metabolites, nucleotides, and cofactors through the mitochondrial inner membrane. This Dictyostelium discoideum (Social amoeba) protein is Mitochondrial substrate carrier family protein J (mcfJ).